The chain runs to 365 residues: PHD finger protein 6 (365 aa).

N-acetylserine is present on Ser2. 2 consecutive short sequence motifs (nuclear localization signal) follow at residues 13-16 (RQRK) and 129-133 (RKHKK). The C2HC pre-PHD-type 1 zinc-finger motif lies at 14-52 (QRKCGFCKSNRDKECGQLLISENQKVAAHHKCMLFSSAL). The interval 14-132 (QRKCGFCKSN…IYMVYCRKHK (119 aa)) is extended PHD1 domain (ePHD1). Residues 80 to 132 (LMCSLCHCPGATIGCDVKTCHRTYHYHCALHDKAQIREKPSQGIYMVYCRKHK) form a PHD-type 1 zinc finger. 3 positions are modified to phosphoserine: Ser138, Ser145, and Ser155. Residues 139 to 211 (EADLEESFNE…RSSPSDTRPK (73 aa)) form a disordered region. Residues 157 to 169 (KSKKKSRKGRPRK) carry the Nucleolar localization signal motif. The segment covering 157–171 (KSKKKSRKGRPRKTN) has biased composition (basic residues). Lys173 participates in a covalent cross-link: Glycyl lysine isopeptide (Lys-Gly) (interchain with G-Cter in SUMO2). Ser183 and Ser199 each carry phosphoserine. The C2HC pre-PHD-type 2 zinc-finger motif lies at 209–249 (RPKCGFCHVGEEENEARGKLHIFNAKKAAAHYKCMLFSSGT). The extended PHD2 domain (ePHD2) stretch occupies residues 209–330 (RPKCGFCHVG…IYKLYCKNHS (122 aa)). A Glycyl lysine isopeptide (Lys-Gly) (interchain with G-Cter in SUMO2) cross-link involves residue Lys227. The PHD-type 2 zinc finger occupies 278-330 (MKCTLCSQPGATIGCEIKACVKTYHYHCGVQDKAKYIENMSRGIYKLYCKNHS). The interval 330 to 365 (SGNDERDEEDEERESKSRGKVEIDQQQLTQQQLNGN) is disordered. Basic and acidic residues predominate over residues 342–352 (RESKSRGKVEI). Residues 354–365 (QQQLTQQQLNGN) show a composition bias toward low complexity. Thr358 carries the post-translational modification Phosphothreonine.

Interacts with UBTF. Interacts with the NuRD complex component RBBP4 (via the nucleolar localization motif), the interaction mediates transcriptional repression activity.

The protein resides in the nucleus. The protein localises to the nucleolus. It localises to the chromosome. It is found in the centromere. Its subcellular location is the kinetochore. Its function is as follows. Transcriptional regulator that associates with ribosomal RNA promoters and suppresses ribosomal RNA (rRNA) transcription. This is PHD finger protein 6 (PHF6) from Pongo abelii (Sumatran orangutan).